Reading from the N-terminus, the 147-residue chain is Hemoglobin subunit gamma (147 aa).

The 145-residue stretch at 3 to 147 (YFTAEEKAAI…VASALARKYH (145 aa)) folds into the Globin domain. Residues H64 and H93 each coordinate heme b.

Belongs to the globin family. As to quaternary structure, heterotetramer of two alpha chains and two gamma chains in fetal hemoglobin (Hb F). In terms of tissue distribution, red blood cells.

Gamma chains make up the fetal hemoglobin F, in combination with alpha chains. The polypeptide is Hemoglobin subunit gamma (HBG) (Dugong dugon (Dugong)).